The sequence spans 1508 residues: Calponin homology domain-containing protein DDB_G0272472 (1508 aa).

Disordered regions lie at residues 1–165 (MFRN…KNDF), 197–290 (DSEE…NLSP), 309–518 (DFKS…TSIV), 531–561 (AANA…LFND), 680–706 (KEKQ…EKEL), and 1036–1391 (KIEK…KKSA). A compositionally biased stretch (low complexity) spans 81 to 107 (SSSPSTSTTTTTKSSSTTTTTTTSSSS). Residues 208–222 (PIKKKQSNDLEKNIF) are compositionally biased toward basic and acidic residues. 3 stretches are compositionally biased toward low complexity: residues 234–251 (KQST…QKQP), 263–290 (FGDS…NLSP), and 315–332 (SNNT…KSKP). 2 stretches are compositionally biased toward basic and acidic residues: residues 337 to 346 (QKEEIKEVST) and 362 to 371 (VDEKPKERST). A compositionally biased stretch (polar residues) spans 380–391 (KTVTVKSNNSFE). Low complexity predominate over residues 395 to 438 (FGSTTTNDDGGDNDFSFTPATTPSSSSSTKATTTSPSSTTTTKS). Residues 439–452 (NINIGQKSNKSVDQ) show a composition bias toward polar residues. Positions 455–498 (QFLNDIFQQEEQDKKRREEEAKLKQQQKQKEKEQIKDEIDDLFK) form a coiled coil. Residues 465–498 (EQDKKRREEEAKLKQQQKQKEKEQIKDEIDDLFK) are compositionally biased toward basic and acidic residues. 2 stretches are compositionally biased toward low complexity: residues 500–516 (SKPT…STTS) and 531–557 (AANA…KSTN). A compositionally biased stretch (basic and acidic residues) spans 1036–1164 (KIEKEKEERD…DQEEKEKQLK (129 aa)). 2 stretches are compositionally biased toward low complexity: residues 1165–1181 (EQQQ…TTTT) and 1189–1206 (DSDA…SSHS). Basic residues predominate over residues 1216-1225 (SKAKGRKKPT). The segment covering 1226–1235 (RRELTKDGNR) has biased composition (basic and acidic residues). The segment covering 1333–1355 (PTVTQTTTTTTTPPTTPPSSSVQ) has biased composition (low complexity). Positions 1362–1374 (RSFSGSSFMGINS) are enriched in polar residues. A Calponin-homology (CH) domain is found at 1397–1504 (MKALDVLLQW…YLSEFFKVMK (108 aa)).

This Dictyostelium discoideum (Social amoeba) protein is Calponin homology domain-containing protein DDB_G0272472.